Reading from the N-terminus, the 284-residue chain is Pseudouridine-5'-phosphate glycosidase (284 aa).

Glutamate 17 serves as the catalytic Proton donor. Residues lysine 77 and valine 97 each contribute to the substrate site. Aspartate 126 is a Mn(2+) binding site. Serine 128–aspartate 130 is a substrate binding site. Lysine 147 functions as the Nucleophile in the catalytic mechanism.

It belongs to the pseudouridine-5'-phosphate glycosidase family. As to quaternary structure, homotrimer. It depends on Mn(2+) as a cofactor.

It catalyses the reaction D-ribose 5-phosphate + uracil = psi-UMP + H2O. Functionally, catalyzes the reversible cleavage of pseudouridine 5'-phosphate (PsiMP) to ribose 5-phosphate and uracil. Functions biologically in the cleavage direction, as part of a pseudouridine degradation pathway. The protein is Pseudouridine-5'-phosphate glycosidase of Thermotoga petrophila (strain ATCC BAA-488 / DSM 13995 / JCM 10881 / RKU-1).